The sequence spans 183 residues: MQAGLSLVCLVLLCSALGEAVLKKPKKQAGTTDTKTDQEPAPIKTKGLKTLDRGWGESIEWVQTYEEGLAKARENNKPLMVIHHLEDCPYSIALKKAFVADRMAQKLAQEDFIMLNLVHPVADENQSPDGHYVPRVIFIDPSLTVRSDLKGRYGNKMYAYDADDIPELITNMKKAKSFLKTEL.

An N-terminal signal peptide occupies residues 1 to 18; that stretch reads MQAGLSLVCLVLLCSALG.

It belongs to the AGR family. As to expression, from stage 18 (neurula) onward, expressed in the cement gland until it degenerates. More weakly expressed in the adjacent hatching gland.

The protein localises to the secreted. Does not appear to be required for cement gland formation. The polypeptide is Anterior gradient protein 1 (ag1) (Xenopus laevis (African clawed frog)).